Reading from the N-terminus, the 68-residue chain is Large ribosomal subunit protein bL33c (68 aa).

It belongs to the bacterial ribosomal protein bL33 family.

It is found in the plastid. The protein localises to the chloroplast. This chain is Large ribosomal subunit protein bL33c, found in Pinus koraiensis (Korean pine).